A 431-amino-acid chain; its full sequence is tRNA(Ile)-lysidine synthase (431 aa).

Residue 19 to 24 (STGIDS) coordinates ATP.

It belongs to the tRNA(Ile)-lysidine synthase family.

Its subcellular location is the cytoplasm. The enzyme catalyses cytidine(34) in tRNA(Ile2) + L-lysine + ATP = lysidine(34) in tRNA(Ile2) + AMP + diphosphate + H(+). Its function is as follows. Ligates lysine onto the cytidine present at position 34 of the AUA codon-specific tRNA(Ile) that contains the anticodon CAU, in an ATP-dependent manner. Cytidine is converted to lysidine, thus changing the amino acid specificity of the tRNA from methionine to isoleucine. The polypeptide is tRNA(Ile)-lysidine synthase (Staphylococcus aureus (strain COL)).